The chain runs to 97 residues: uncharacterized protein (97 aa).

This is an uncharacterized protein from Methanocaldococcus jannaschii (strain ATCC 43067 / DSM 2661 / JAL-1 / JCM 10045 / NBRC 100440) (Methanococcus jannaschii).